Here is a 219-residue protein sequence, read N- to C-terminus: MKRKIVIAVDGTAGSGKTATFNTVAKKIGYEFIDTGLMYRAFTLLCIESEIDFNNKEEIIESLKKFDFSVKNNKPHLNGKEVEKRIQENDIVKFINYVTPIPEVRKFMVEAQRAMVKGGGYIEIGRDITTVVLPNADLKIFLDSSVEARAERRFKQNERLGIKNNNLNEIKNSIINRDEQDFKNGLRKAEDAWLIDNSNIPIQDVVNMVIDKIKELEGN.

11 to 19 (GTAGSGKTA) serves as a coordination point for ATP.

This sequence belongs to the cytidylate kinase family. Type 1 subfamily.

It localises to the cytoplasm. It catalyses the reaction CMP + ATP = CDP + ADP. It carries out the reaction dCMP + ATP = dCDP + ADP. The polypeptide is Cytidylate kinase (Mesoplasma florum (strain ATCC 33453 / NBRC 100688 / NCTC 11704 / L1) (Acholeplasma florum)).